A 258-amino-acid polypeptide reads, in one-letter code: Cytosolic Fe-S cluster assembly factor Nubp2 homolog (258 aa).

Residue 14–21 (GKGGVGKS) coordinates ATP. [4Fe-4S] cluster contacts are provided by C188 and C191.

It belongs to the Mrp/NBP35 ATP-binding proteins family. NUBP2/CFD1 subfamily. Heterotetramer of 2 Nubp1 and 2 Nubp2 chains. [4Fe-4S] cluster serves as cofactor.

The protein resides in the cytoplasm. Its function is as follows. Component of the cytosolic iron-sulfur (Fe/S) protein assembly (CIA) machinery. Required for maturation of extramitochondrial Fe-S proteins. The Nubp1-Nubp2 heterotetramer forms a Fe-S scaffold complex, mediating the de novo assembly of an Fe-S cluster and its transfer to target apoproteins. The protein is Cytosolic Fe-S cluster assembly factor Nubp2 homolog of Drosophila pseudoobscura pseudoobscura (Fruit fly).